A 263-amino-acid chain; its full sequence is Undecaprenyl-diphosphatase (263 aa).

7 helical membrane passes run 38-58 (RSDFFNIVIQAGAILAICLAL), 75-95 (RDYVLKIGVAFLVTAVVGLIV), 108-128 (PVAWALLIGGVWMLVAEHFAG), 135-155 (VVTWKVAIAVGLAQVVAGVFP), 181-201 (FVFMVGIPTMFAASGYALLEM), 217-237 (VAFIAATLTGFVVVKWLLGYI), and 242-262 (FTVFAVYRILLGAALLLWLPA).

Belongs to the UppP family.

The protein resides in the cell inner membrane. The enzyme catalyses di-trans,octa-cis-undecaprenyl diphosphate + H2O = di-trans,octa-cis-undecaprenyl phosphate + phosphate + H(+). In terms of biological role, catalyzes the dephosphorylation of undecaprenyl diphosphate (UPP). Confers resistance to bacitracin. This Xanthomonas campestris pv. campestris (strain 8004) protein is Undecaprenyl-diphosphatase.